The chain runs to 217 residues: tRNA (guanine-N(7)-)-methyltransferase (217 aa).

S-adenosyl-L-methionine is bound by residues Glu-44, Glu-69, Asp-96, and Asp-118. The active site involves Asp-118. Substrate is bound by residues Lys-122, Asp-154, and Thr-191–Glu-194.

This sequence belongs to the class I-like SAM-binding methyltransferase superfamily. TrmB family.

The catalysed reaction is guanosine(46) in tRNA + S-adenosyl-L-methionine = N(7)-methylguanosine(46) in tRNA + S-adenosyl-L-homocysteine. The protein operates within tRNA modification; N(7)-methylguanine-tRNA biosynthesis. Its function is as follows. Catalyzes the formation of N(7)-methylguanine at position 46 (m7G46) in tRNA. This chain is tRNA (guanine-N(7)-)-methyltransferase, found in Bacillus cytotoxicus (strain DSM 22905 / CIP 110041 / 391-98 / NVH 391-98).